A 152-amino-acid chain; its full sequence is Small ribosomal subunit protein uS13 (152 aa).

The segment at 133 to 152 (GQHTKTTGRRGRTVGVSKKK) is disordered.

The protein belongs to the universal ribosomal protein uS13 family.

It localises to the cytoplasm. Located at the top of the head of the 40S subunit, it contacts several helices of the 18S rRNA. The protein is Small ribosomal subunit protein uS13 (RpS18) of Spodoptera frugiperda (Fall armyworm).